A 467-amino-acid polypeptide reads, in one-letter code: DNA polymerase IV (467 aa).

One can recognise a UmuC domain in the interval 5–187; sequence VLHIDMDAFF…LPVGALWGVG (183 aa). 2 residues coordinate Mg(2+): Asp-9 and Asp-104. The active site involves Glu-105. Disordered stretches follow at residues 364 to 386 and 428 to 449; these read PDTD…VEAP and TKGR…DPLD.

The protein belongs to the DNA polymerase type-Y family. As to quaternary structure, monomer. Requires Mg(2+) as cofactor.

It is found in the cytoplasm. It catalyses the reaction DNA(n) + a 2'-deoxyribonucleoside 5'-triphosphate = DNA(n+1) + diphosphate. Its function is as follows. Poorly processive, error-prone DNA polymerase involved in untargeted mutagenesis. Copies undamaged DNA at stalled replication forks, which arise in vivo from mismatched or misaligned primer ends. These misaligned primers can be extended by PolIV. Exhibits no 3'-5' exonuclease (proofreading) activity. May be involved in translesional synthesis, in conjunction with the beta clamp from PolIII. The chain is DNA polymerase IV from Corynebacterium glutamicum (strain R).